The primary structure comprises 271 residues: Shikimate dehydrogenase (NADP(+)) (271 aa).

Shikimate contacts are provided by residues 14–16 and Thr61; that span reads SLS. Lys65 functions as the Proton acceptor in the catalytic mechanism. Shikimate-binding residues include Asn86 and Asp101. Residues 125–129 and Ile212 each bind NADP(+); that span reads GAGGA. Tyr214 contacts shikimate. Position 235 (Gly235) interacts with NADP(+).

It belongs to the shikimate dehydrogenase family. Homodimer.

The enzyme catalyses shikimate + NADP(+) = 3-dehydroshikimate + NADPH + H(+). The protein operates within metabolic intermediate biosynthesis; chorismate biosynthesis; chorismate from D-erythrose 4-phosphate and phosphoenolpyruvate: step 4/7. In terms of biological role, involved in the biosynthesis of the chorismate, which leads to the biosynthesis of aromatic amino acids. Catalyzes the reversible NADPH linked reduction of 3-dehydroshikimate (DHSA) to yield shikimate (SA). This chain is Shikimate dehydrogenase (NADP(+)), found in Clostridium perfringens (strain 13 / Type A).